A 571-amino-acid polypeptide reads, in one-letter code: Urease subunit alpha (571 aa).

Residues 133 to 571 (GGIDTHVHFI…LPLTQRYFLF (439 aa)) enclose the Urease domain. Residues His-138, His-140, and Lys-221 each contribute to the Ni(2+) site. Residue Lys-221 is modified to N6-carboxylysine. His-223 is a substrate binding site. Ni(2+)-binding residues include His-250 and His-276. Residue His-324 is the Proton donor of the active site. Position 364 (Asp-364) interacts with Ni(2+).

This sequence belongs to the metallo-dependent hydrolases superfamily. Urease alpha subunit family. In terms of assembly, heterotrimer of UreA (gamma), UreB (beta) and UreC (alpha) subunits. Three heterotrimers associate to form the active enzyme. Ni cation is required as a cofactor. In terms of processing, carboxylation allows a single lysine to coordinate two nickel ions.

It localises to the cytoplasm. It catalyses the reaction urea + 2 H2O + H(+) = hydrogencarbonate + 2 NH4(+). The protein operates within nitrogen metabolism; urea degradation; CO(2) and NH(3) from urea (urease route): step 1/1. This is Urease subunit alpha from Staphylococcus aureus (strain bovine RF122 / ET3-1).